The chain runs to 148 residues: UPF0178 protein CA_C2825 (148 aa).

This sequence belongs to the UPF0178 family.

This is UPF0178 protein CA_C2825 from Clostridium acetobutylicum (strain ATCC 824 / DSM 792 / JCM 1419 / IAM 19013 / LMG 5710 / NBRC 13948 / NRRL B-527 / VKM B-1787 / 2291 / W).